The chain runs to 202 residues: Hydrogenase expression/formation protein HoxM (202 aa).

E15, D61, and H92 together coordinate Ni(2+).

It belongs to the peptidase A31 family.

Its function is as follows. Absolutely required for hydrogenase activity. Mediates the attachment of hydrogenase to the bacterial membrane; attachment is a requirement for enzymatic activity. The chain is Hydrogenase expression/formation protein HoxM (hoxM) from Cupriavidus necator (strain ATCC 17699 / DSM 428 / KCTC 22496 / NCIMB 10442 / H16 / Stanier 337) (Ralstonia eutropha).